A 405-amino-acid polypeptide reads, in one-letter code: 3-hydroxy-3-methylglutaryl-coenzyme A reductase (405 aa).

Residues Glu100 and Asp310 each act as charge relay system in the active site. His400 functions as the Proton donor in the catalytic mechanism.

This sequence belongs to the HMG-CoA reductase family.

It carries out the reaction (R)-mevalonate + 2 NADP(+) + CoA = (3S)-3-hydroxy-3-methylglutaryl-CoA + 2 NADPH + 2 H(+). It participates in metabolic intermediate biosynthesis; (R)-mevalonate biosynthesis; (R)-mevalonate from acetyl-CoA: step 3/3. Functionally, converts HMG-CoA to mevalonate. This chain is 3-hydroxy-3-methylglutaryl-coenzyme A reductase (hmgA), found in Methanocaldococcus jannaschii (strain ATCC 43067 / DSM 2661 / JAL-1 / JCM 10045 / NBRC 100440) (Methanococcus jannaschii).